Reading from the N-terminus, the 118-residue chain is NADH-quinone oxidoreductase subunit A (118 aa).

A run of 3 helical transmembrane segments spans residues Tyr-5 to Leu-25, Leu-62 to Val-82, and Leu-87 to Val-107.

Belongs to the complex I subunit 3 family. NDH-1 is composed of 14 different subunits. Subunits NuoA, H, J, K, L, M, N constitute the membrane sector of the complex.

Its subcellular location is the cell membrane. The enzyme catalyses a quinone + NADH + 5 H(+)(in) = a quinol + NAD(+) + 4 H(+)(out). In terms of biological role, NDH-1 shuttles electrons from NADH, via FMN and iron-sulfur (Fe-S) centers, to quinones in the respiratory chain. The immediate electron acceptor for the enzyme in this species is believed to be ubiquinone. Couples the redox reaction to proton translocation (for every two electrons transferred, four hydrogen ions are translocated across the cytoplasmic membrane), and thus conserves the redox energy in a proton gradient. This Herpetosiphon aurantiacus (strain ATCC 23779 / DSM 785 / 114-95) protein is NADH-quinone oxidoreductase subunit A.